A 510-amino-acid polypeptide reads, in one-letter code: Leucine-rich repeat-containing protein 14B (510 aa).

The LRR 1; degenerate repeat unit spans residues 100 to 137; sequence SNRLRVADFTGIQDVQVQQCPCGRALGRWGRTKVLART. Residues 181–205 form an LRR 2; degenerate repeat; sequence QVCCPSLRADSLSPGQLLQVLGLAG. An LRR 4; degenerate repeat occupies 234 to 273; that stretch reads FPQLTSLTLPTKAFDAPPTCAPDPEGEDLLLTSIAWELSQ. LRR repeat units lie at residues 274–298, 299–330, 331–349, 355–382, and 383–407; these read MNQL…LSPL, KTPL…AHLE, VLDL…TFFR, AQTL…GLSP, and CSQL…LFAA.

Belongs to the PRAME family. LRRC14 subfamily.

This Mus musculus (Mouse) protein is Leucine-rich repeat-containing protein 14B.